A 387-amino-acid polypeptide reads, in one-letter code: Alkanesulfonate monooxygenase (387 aa).

Belongs to the SsuD family.

It carries out the reaction an alkanesulfonate + FMNH2 + O2 = an aldehyde + FMN + sulfite + H2O + 2 H(+). Functionally, catalyzes the desulfonation of aliphatic sulfonates. This Cupriavidus necator (strain ATCC 17699 / DSM 428 / KCTC 22496 / NCIMB 10442 / H16 / Stanier 337) (Ralstonia eutropha) protein is Alkanesulfonate monooxygenase.